The chain runs to 873 residues: Probable inorganic carbon transporter subunit DabA (873 aa).

Cys393, Asp395, His575, and Cys590 together coordinate Zn(2+).

It belongs to the inorganic carbon transporter (TC 9.A.2) DabA family. In terms of assembly, forms a complex with DabB. Requires Zn(2+) as cofactor.

Its subcellular location is the cell membrane. Part of an energy-coupled inorganic carbon pump. The sequence is that of Probable inorganic carbon transporter subunit DabA from Bacillus licheniformis (strain ATCC 14580 / DSM 13 / JCM 2505 / CCUG 7422 / NBRC 12200 / NCIMB 9375 / NCTC 10341 / NRRL NRS-1264 / Gibson 46).